Here is a 199-residue protein sequence, read N- to C-terminus: Ribonuclease HII (199 aa).

The RNase H type-2 domain maps to 9-198 (QFVAGVDEVG…VRAAIEQMNL (190 aa)). Positions 15, 16, and 107 each coordinate a divalent metal cation.

The protein belongs to the RNase HII family. It depends on Mn(2+) as a cofactor. The cofactor is Mg(2+).

It is found in the cytoplasm. The enzyme catalyses Endonucleolytic cleavage to 5'-phosphomonoester.. Functionally, endonuclease that specifically degrades the RNA of RNA-DNA hybrids. This is Ribonuclease HII from Saccharophagus degradans (strain 2-40 / ATCC 43961 / DSM 17024).